The primary structure comprises 385 residues: tRNA-specific 2-thiouridylase MnmA (385 aa).

ATP is bound by residues 18–25 (AMSGGVDS) and Leu44. Cys112 (nucleophile) is an active-site residue. An intrachain disulfide couples Cys112 to Cys209. Gly136 is an ATP binding site. Positions 159-161 (RDQ) are interaction with tRNA. Catalysis depends on Cys209, which acts as the Cysteine persulfide intermediate.

Belongs to the MnmA/TRMU family.

The protein resides in the cytoplasm. The catalysed reaction is S-sulfanyl-L-cysteinyl-[protein] + uridine(34) in tRNA + AH2 + ATP = 2-thiouridine(34) in tRNA + L-cysteinyl-[protein] + A + AMP + diphosphate + H(+). Functionally, catalyzes the 2-thiolation of uridine at the wobble position (U34) of tRNA, leading to the formation of s(2)U34. This chain is tRNA-specific 2-thiouridylase MnmA, found in Methylorubrum populi (strain ATCC BAA-705 / NCIMB 13946 / BJ001) (Methylobacterium populi).